A 336-amino-acid polypeptide reads, in one-letter code: Biotin synthase (336 aa).

The Radical SAM core domain occupies V48–R277. [4Fe-4S] cluster is bound by residues C66, C70, and C73. 4 residues coordinate [2Fe-2S] cluster: C110, C142, C202, and R272.

This sequence belongs to the radical SAM superfamily. Biotin synthase family. Homodimer. [4Fe-4S] cluster serves as cofactor. [2Fe-2S] cluster is required as a cofactor.

The catalysed reaction is (4R,5S)-dethiobiotin + (sulfur carrier)-SH + 2 reduced [2Fe-2S]-[ferredoxin] + 2 S-adenosyl-L-methionine = (sulfur carrier)-H + biotin + 2 5'-deoxyadenosine + 2 L-methionine + 2 oxidized [2Fe-2S]-[ferredoxin]. It functions in the pathway cofactor biosynthesis; biotin biosynthesis; biotin from 7,8-diaminononanoate: step 2/2. Catalyzes the conversion of dethiobiotin (DTB) to biotin by the insertion of a sulfur atom into dethiobiotin via a radical-based mechanism. This Persephonella marina (strain DSM 14350 / EX-H1) protein is Biotin synthase.